Consider the following 404-residue polypeptide: Tryptophan synthase beta chain (404 aa).

Lysine 95 carries the N6-(pyridoxal phosphate)lysine modification.

This sequence belongs to the TrpB family. In terms of assembly, tetramer of two alpha and two beta chains. Pyridoxal 5'-phosphate is required as a cofactor.

It catalyses the reaction (1S,2R)-1-C-(indol-3-yl)glycerol 3-phosphate + L-serine = D-glyceraldehyde 3-phosphate + L-tryptophan + H2O. The protein operates within amino-acid biosynthesis; L-tryptophan biosynthesis; L-tryptophan from chorismate: step 5/5. In terms of biological role, the beta subunit is responsible for the synthesis of L-tryptophan from indole and L-serine. The polypeptide is Tryptophan synthase beta chain (trpB) (Thermus thermophilus (strain ATCC BAA-163 / DSM 7039 / HB27)).